Consider the following 144-residue polypeptide: Actin-associated protein FAM107A (144 aa).

A coiled-coil region spans residues 66-112 (ELQRVLEHRRRNQLIKKKKEELEAKRLQCPFEQELLRRQQRLNQLEK). Residues 74-84 (RRRNQLIKKKK) carry the Nuclear localization signal motif. The interval 105–124 (QRLNQLEKPPEKEEDHAPEF) is disordered. Positions 112 to 124 (KPPEKEEDHAPEF) are enriched in basic and acidic residues.

Belongs to the FAM107 family. Interacts with ACTB. Interacts with COMMD1; this interaction stabilizes COMMD1 in the nucleus. Interacts with MAP1A. Interacts with PRDX1. Interacts with F-actin. As to expression, widely expressed. Expressed in neurons. Expressed in malignant glial tumors. Expression is reduced or absent in a number of cancer cell lines.

It localises to the nucleus. The protein localises to the cytoplasm. It is found in the cytoskeleton. The protein resides in the stress fiber. Its subcellular location is the cell junction. It localises to the focal adhesion. The protein localises to the cell projection. It is found in the ruffle membrane. The protein resides in the synapse. Functionally, stress-inducible actin-binding protein that plays a role in synaptic and cognitive functions by modulating actin filamentous (F-actin) dynamics. Mediates polymerization of globular actin to F-actin. Also binds to, stabilizes and bundles F-actin. Involved in synaptic function by regulating neurite outgrowth in an actin-dependent manner and for the acquisition of hippocampus-dependent cognitive function, such as learning and long-term memory. Plays a role in the actin and microtubule cytoskeleton organization; negatively regulates focal adhesion (FA) assembly promoting malignant glial cell migration in an actin-, microtubule- and MAP1A-dependent manner. Also involved in neuroblastoma G1/S phase cell cycle progression and cell proliferation inhibition by stimulating ubiquitination of NF-kappa-B subunit RELA and NF-kappa-B degradation in a COMMD1- and actin-dependent manner. May play a role in tumor development. The polypeptide is Actin-associated protein FAM107A (Homo sapiens (Human)).